The following is a 387-amino-acid chain: Succinyl-diaminopimelate desuccinylase (387 aa).

His-74 is a binding site for Zn(2+). Asp-76 is a catalytic residue. Asp-107 contributes to the Zn(2+) binding site. Glu-142 functions as the Proton acceptor in the catalytic mechanism. Residues Glu-143, Glu-171, and His-360 each coordinate Zn(2+).

This sequence belongs to the peptidase M20A family. DapE subfamily. Homodimer. Zn(2+) serves as cofactor. Requires Co(2+) as cofactor.

The catalysed reaction is N-succinyl-(2S,6S)-2,6-diaminopimelate + H2O = (2S,6S)-2,6-diaminopimelate + succinate. Its pathway is amino-acid biosynthesis; L-lysine biosynthesis via DAP pathway; LL-2,6-diaminopimelate from (S)-tetrahydrodipicolinate (succinylase route): step 3/3. Its function is as follows. Catalyzes the hydrolysis of N-succinyl-L,L-diaminopimelic acid (SDAP), forming succinate and LL-2,6-diaminopimelate (DAP), an intermediate involved in the bacterial biosynthesis of lysine and meso-diaminopimelic acid, an essential component of bacterial cell walls. This Rhodopseudomonas palustris (strain BisA53) protein is Succinyl-diaminopimelate desuccinylase.